A 538-amino-acid polypeptide reads, in one-letter code: Neutral protease B (538 aa).

The N-terminal stretch at 1–28 is a signal peptide; that stretch reads MRNLTKTSLLLAGLCTAAQMVFVTHASA. A propeptide spans 29–223 (activation peptide); sequence EESIEYDHTY…VIESFNAIHE (195 aa). Asp365 provides a ligand contact to Ca(2+). His369 is a Zn(2+) binding site. Glu370 is an active-site residue. Residues His373 and Glu393 each coordinate Zn(2+). Residues Asp404, Asp406, Asp407, Glu409, Glu412, Tyr415, Thr416, Ile419, and Asp422 each contribute to the Ca(2+) site. The segment at 421–441 is disordered; it reads GDSLRSLEDPSKQGNPDHYSN. The active-site Proton donor is His453.

It belongs to the peptidase M4 family. Zn(2+) is required as a cofactor.

It localises to the secreted. Protease activity can be inhibited in vitro by either a zinc specific chelator, 1,10-phenanthroline, or a metal chelator, EDTA. The enzyme is resistant to phenylmethylsulfonyl fluoride and iodoacetic acid. Its function is as follows. Protease able to cleave casein in vitro. The protein is Neutral protease B of Bacillus subtilis (strain 168).